The primary structure comprises 325 residues: Reticulocalbin-1 (325 aa).

A signal peptide spans 1-23; the sequence is MARGGRLGLALGLLLALVLALRA. A glycan (N-linked (GlcNAc...) asparagine; partial) is linked at Asn47. Phosphoserine is present on residues Ser49 and Ser74. 6 EF-hand domains span residues 73–108, 109–144, 160–195, 197–232, 238–273, and 274–309; these read ESKE…VQKR, YIYD…YYLG, KMLP…EEFE, MKEI…HEDN, WVLS…QDYD, and HAQA…FVGS. 28 residues coordinate Ca(2+): Asp86, Asp88, Asp90, Glu97, Asp122, Asp124, Asp126, Lys128, Glu133, Asp173, Asp175, Asp177, Thr179, Glu184, Asp210, Asn212, Asp214, Glu221, Asp251, Asn253, Asp255, Lys257, Glu262, Asp287, Asn289, Asp291, Met293, and Glu298. The Prevents secretion from ER signature appears at 322–325; that stretch reads HDEL.

Belongs to the CREC family. In terms of processing, O-glycosylated. O-mannosylated by POMT1 and POMT2 and elongated by POMGNT1.

The protein localises to the endoplasmic reticulum lumen. In terms of biological role, may regulate calcium-dependent activities in the endoplasmic reticulum lumen or post-ER compartment. In Mus musculus (Mouse), this protein is Reticulocalbin-1 (Rcn1).